Reading from the N-terminus, the 545-residue chain is Chaperonin GroEL (545 aa).

ATP contacts are provided by residues 30-33 (TLGP), K51, 87-91 (DGTTT), G415, 479-481 (NAA), and D495.

The protein belongs to the chaperonin (HSP60) family. Forms a cylinder of 14 subunits composed of two heptameric rings stacked back-to-back. Interacts with the co-chaperonin GroES.

Its subcellular location is the cytoplasm. The catalysed reaction is ATP + H2O + a folded polypeptide = ADP + phosphate + an unfolded polypeptide.. Functionally, together with its co-chaperonin GroES, plays an essential role in assisting protein folding. The GroEL-GroES system forms a nano-cage that allows encapsulation of the non-native substrate proteins and provides a physical environment optimized to promote and accelerate protein folding. The protein is Chaperonin GroEL of Cellvibrio japonicus (strain Ueda107) (Pseudomonas fluorescens subsp. cellulosa).